Reading from the N-terminus, the 302-residue chain is Bacteriochlorophyll synthase 33 kDa chain (302 aa).

A run of 9 helical transmembrane segments spans residues 25–45 (ITWF…GIWP), 49–69 (WPLV…MSQA), 97–117 (WGLY…WMLG), 119–139 (WGFG…VEPI), 145–165 (GWWG…FTGA), 166–186 (AVLS…LYAF), 223–243 (LACT…VIWG), 246–266 (IHAG…RVLL), and 275–295 (WYNG…AFAI).

It localises to the cell membrane. It functions in the pathway porphyrin-containing compound metabolism; bacteriochlorophyll biosynthesis (light-independent). In terms of biological role, catalyzes the esterification of bacteriochlorophyllide a by geranylgeraniol-PPi. The protein is Bacteriochlorophyll synthase 33 kDa chain (bchG) of Cereibacter sphaeroides (strain ATCC 17023 / DSM 158 / JCM 6121 / CCUG 31486 / LMG 2827 / NBRC 12203 / NCIMB 8253 / ATH 2.4.1.) (Rhodobacter sphaeroides).